The primary structure comprises 407 residues: Leucine-rich repeat-containing protein 42 (407 aa).

5 LRR repeats span residues 138 to 159 (VLKS…EEIR), 163 to 184 (SLEC…FKYI), 191 to 211 (SLVK…QRLT), 223 to 243 (NLQL…RYLT), and 247 to 268 (TLQK…KGFF). Positions 360–389 (VQSSPSGETHSTHKSRKRRLSTEEEQSAAP) are disordered.

It belongs to the LRRC42 family.

The sequence is that of Leucine-rich repeat-containing protein 42 (lrrc42) from Danio rerio (Zebrafish).